Reading from the N-terminus, the 271-residue chain is Beta-lactamase (271 aa).

Ser46 serves as the catalytic Acyl-ester intermediate. 210 to 212 (KTG) contributes to the substrate binding site.

The protein belongs to the class-A beta-lactamase family. In terms of assembly, monomer.

The enzyme catalyses a beta-lactam + H2O = a substituted beta-amino acid. In terms of biological role, hydrolyzes broad-spectrum beta-lactam antibiotics. Active against cephalosporins. This is Beta-lactamase from Proteus vulgaris.